Consider the following 265-residue polypeptide: Glutamate racemase (265 aa).

Substrate is bound by residues 7–8 (DS) and 39–40 (YG). Cys70 acts as the Proton donor/acceptor in catalysis. 71–72 (NT) contacts substrate. Catalysis depends on Cys179, which acts as the Proton donor/acceptor. 180–181 (TH) provides a ligand contact to substrate.

Belongs to the aspartate/glutamate racemases family.

The enzyme catalyses L-glutamate = D-glutamate. The protein operates within cell wall biogenesis; peptidoglycan biosynthesis. Functionally, provides the (R)-glutamate required for cell wall biosynthesis. In Gloeobacter violaceus (strain ATCC 29082 / PCC 7421), this protein is Glutamate racemase.